The chain runs to 400 residues: Chalcone synthase WHP1 (400 aa).

The active site involves Cys167.

It belongs to the thiolase-like superfamily. Chalcone/stilbene synthases family.

The enzyme catalyses (E)-4-coumaroyl-CoA + 3 malonyl-CoA + 3 H(+) = 2',4,4',6'-tetrahydroxychalcone + 3 CO2 + 4 CoA. It participates in secondary metabolite biosynthesis; flavonoid biosynthesis. Its function is as follows. The primary product of this enzyme is 4,2',4',6'-tetrahydroxychalcone (also termed naringenin-chalcone or chalcone) which can under specific conditions spontaneously isomerize into naringenin. The protein is Chalcone synthase WHP1 (WHP1) of Zea mays (Maize).